Here is a 487-residue protein sequence, read N- to C-terminus: Protein NEN2 (487 aa).

Positions 18 to 179 (FFDVETTIPF…LDDVRMNFEV (162 aa)) constitute an Exonuclease domain. Mg(2+) is bound by residues aspartate 20 and glutamate 22. Histidine 167 (proton donor/acceptor) is an active-site residue. Aspartate 172 lines the Mg(2+) pocket. Disordered stretches follow at residues 200–233 (NSVTTTTPETSSRRRRTIKKSPLQSPTDQQTGEN) and 269–291 (SDVPMEEEQNQQSETVASEGTGD). Over residues 221–233 (PLQSPTDQQTGEN) the composition is skewed to polar residues.

The cofactor is Mg(2+). In terms of tissue distribution, expressed in the sieve elements and phloem pole pericycle cells.

It localises to the cytoplasm. The protein localises to the nucleus. Its function is as follows. Probable exonuclease involved in enuclation of sieve elements. The chain is Protein NEN2 from Arabidopsis thaliana (Mouse-ear cress).